Here is a 158-residue protein sequence, read N- to C-terminus: Transcriptional repressor NrdR (158 aa).

The disordered stretch occupies residues 1–22; that stretch reads MRCPYCGSEDTQVKDSRPAEDN. A zinc finger lies at 3-34; sequence CPYCGSEDTQVKDSRPAEDNTSIRRRRICPDC. Residues 11–22 show a composition bias toward basic and acidic residues; it reads TQVKDSRPAEDN. Residues 49 to 139 enclose the ATP-cone domain; that stretch reads LMVIKKTGRK…VYRDFSHAED (91 aa).

The protein belongs to the NrdR family. The cofactor is Zn(2+).

In terms of biological role, negatively regulates transcription of bacterial ribonucleotide reductase nrd genes and operons by binding to NrdR-boxes. This chain is Transcriptional repressor NrdR, found in Rhizobium rhizogenes (strain K84 / ATCC BAA-868) (Agrobacterium radiobacter).